A 363-amino-acid polypeptide reads, in one-letter code: tRNA N6-adenosine threonylcarbamoyltransferase (363 aa).

Fe cation-binding residues include His-121 and His-125. Substrate is bound by residues Leu-143–Gly-147, Asp-176, Gly-189, and Asn-287. Residue Asp-315 participates in Fe cation binding.

The protein belongs to the KAE1 / TsaD family. The cofactor is Fe(2+).

Its subcellular location is the cytoplasm. It catalyses the reaction L-threonylcarbamoyladenylate + adenosine(37) in tRNA = N(6)-L-threonylcarbamoyladenosine(37) in tRNA + AMP + H(+). In terms of biological role, required for the formation of a threonylcarbamoyl group on adenosine at position 37 (t(6)A37) in tRNAs that read codons beginning with adenine. Is involved in the transfer of the threonylcarbamoyl moiety of threonylcarbamoyl-AMP (TC-AMP) to the N6 group of A37, together with TsaE and TsaB. TsaD likely plays a direct catalytic role in this reaction. The sequence is that of tRNA N6-adenosine threonylcarbamoyltransferase from Rhodopseudomonas palustris (strain HaA2).